Reading from the N-terminus, the 473-residue chain is Adenosylhomocysteinase (473 aa).

Residues threonine 64, aspartate 139, and glutamate 199 each coordinate substrate. 200-202 (TTT) is an NAD(+) binding site. Residues lysine 229 and aspartate 233 each coordinate substrate. Residues asparagine 234, 263–268 (GYGDVG), glutamate 286, asparagine 321, 342–344 (IGH), and asparagine 387 contribute to the NAD(+) site.

Belongs to the adenosylhomocysteinase family. The cofactor is NAD(+).

The protein localises to the cytoplasm. The catalysed reaction is S-adenosyl-L-homocysteine + H2O = L-homocysteine + adenosine. Its pathway is amino-acid biosynthesis; L-homocysteine biosynthesis; L-homocysteine from S-adenosyl-L-homocysteine: step 1/1. Its function is as follows. May play a key role in the regulation of the intracellular concentration of adenosylhomocysteine. The polypeptide is Adenosylhomocysteinase (Paraburkholderia phymatum (strain DSM 17167 / CIP 108236 / LMG 21445 / STM815) (Burkholderia phymatum)).